Reading from the N-terminus, the 895-residue chain is Pyruvate dehydrogenase E1 component (895 aa).

The tract at residues Met1 to Gln20 is disordered.

Homodimer. Part of the PDH complex, consisting of multiple copies of pyruvate dehydrogenase (E1), dihydrolipoamide acetyltransferase (E2) and lipoamide dehydrogenase (E3). Thiamine diphosphate serves as cofactor.

The enzyme catalyses N(6)-[(R)-lipoyl]-L-lysyl-[protein] + pyruvate + H(+) = N(6)-[(R)-S(8)-acetyldihydrolipoyl]-L-lysyl-[protein] + CO2. Its function is as follows. Component of the pyruvate dehydrogenase (PDH) complex, that catalyzes the overall conversion of pyruvate to acetyl-CoA and CO(2). The protein is Pyruvate dehydrogenase E1 component (pdhA) of Cupriavidus necator (strain ATCC 17699 / DSM 428 / KCTC 22496 / NCIMB 10442 / H16 / Stanier 337) (Ralstonia eutropha).